The primary structure comprises 416 residues: Serine/threonine transporter SstT (416 aa).

9 consecutive transmembrane segments (helical) span residues 15–35 (SLVS…MFMP), 49–69 (VGAL…AAII), 82–102 (ILLL…VASF), 141–161 (ALLD…GIAM), 192–212 (LGIL…ALFG), 217–237 (LVVL…LIVF), 288–308 (VSIP…ITVL), 316–336 (LGME…TISA), and 363–383 (IAMQ…SAET).

It belongs to the dicarboxylate/amino acid:cation symporter (DAACS) (TC 2.A.23) family.

Its subcellular location is the cell inner membrane. It catalyses the reaction L-serine(in) + Na(+)(in) = L-serine(out) + Na(+)(out). It carries out the reaction L-threonine(in) + Na(+)(in) = L-threonine(out) + Na(+)(out). In terms of biological role, involved in the import of serine and threonine into the cell, with the concomitant import of sodium (symport system). This Aeromonas hydrophila subsp. hydrophila (strain ATCC 7966 / DSM 30187 / BCRC 13018 / CCUG 14551 / JCM 1027 / KCTC 2358 / NCIMB 9240 / NCTC 8049) protein is Serine/threonine transporter SstT.